The sequence spans 229 residues: Large ribosomal subunit protein uL1 (229 aa).

Belongs to the universal ribosomal protein uL1 family. As to quaternary structure, part of the 50S ribosomal subunit.

Its function is as follows. Binds directly to 23S rRNA. The L1 stalk is quite mobile in the ribosome, and is involved in E site tRNA release. In terms of biological role, protein L1 is also a translational repressor protein, it controls the translation of the L11 operon by binding to its mRNA. The polypeptide is Large ribosomal subunit protein uL1 (Haemophilus influenzae (strain 86-028NP)).